Here is an 892-residue protein sequence, read N- to C-terminus: Translation initiation factor IF-2 (892 aa).

Composition is skewed to basic and acidic residues over residues 93-159 and 166-216; these read VKRD…KDKV and DMTK…EENK. The disordered stretch occupies residues 93 to 304; the sequence is VKRDPQEAER…SSLQQGFQKP (212 aa). The span at 254 to 269 shows a compositional bias: basic residues; it reads GRGRNAKAARPAKKGK. A compositionally biased stretch (basic and acidic residues) spans 270 to 282; that stretch reads HAESKADREEARA. A tr-type G domain is found at 391–560; it reads PRAPVVTIMG…LLQAEVLELK (170 aa). Residues 400–407 form a G1 region; sequence GHVDHGKT. 400–407 is a binding site for GTP; it reads GHVDHGKT. Residues 425-429 are G2; the sequence is GITQH. The segment at 446–449 is G3; sequence DTPG. Residues 446-450 and 500-503 contribute to the GTP site; these read DTPGH and NKID. A G4 region spans residues 500–503; that stretch reads NKID. The interval 536–538 is G5; the sequence is SAK.

Belongs to the TRAFAC class translation factor GTPase superfamily. Classic translation factor GTPase family. IF-2 subfamily.

The protein resides in the cytoplasm. In terms of biological role, one of the essential components for the initiation of protein synthesis. Protects formylmethionyl-tRNA from spontaneous hydrolysis and promotes its binding to the 30S ribosomal subunits. Also involved in the hydrolysis of GTP during the formation of the 70S ribosomal complex. This Salmonella gallinarum (strain 287/91 / NCTC 13346) protein is Translation initiation factor IF-2.